Here is a 419-residue protein sequence, read N- to C-terminus: Peptide chain release factor subunit 1 (419 aa).

It belongs to the eukaryotic release factor 1 family. Heterodimer of two subunits, one of which binds GTP.

It localises to the cytoplasm. Its function is as follows. Directs the termination of nascent peptide synthesis (translation) in response to the termination codons UAA, UAG and UGA. In Methanococcus maripaludis (strain C5 / ATCC BAA-1333), this protein is Peptide chain release factor subunit 1.